Consider the following 672-residue polypeptide: F(420)H(2) dehydrogenase subunit L (672 aa).

16 helical membrane-spanning segments follow: residues 8-28 (EFAFLIPLLPALAFAITFFFG), 37-57 (IVPILAIAASFVISFAITLGL), 79-99 (ILIDPLAAVMLSMVSFVSLLI), 136-156 (ILQLFVSWELVGLCSYLLIGF), 179-199 (VMFLTGIIVLTSDLLKVSGGF), 225-245 (ILGFEISHLTIITLLFFGGAV), 265-285 (TTVSALIHAATMVTAGVYLVA), 298-318 (LMVVAYFGGFTALFAGTMGIV), 337-357 (MMLGLGLGTAIGLEAVGISLF), 360-380 (INHAFFKALLFLCAGSVIHAV), 394-414 (VMPITAATMTIAALALAGFGI), 447-467 (YVFSILAALLTSIYIFRLIFM), 483-503 (PAIMTIPLSILAIFALAFGAL), 545-565 (LAVLWPPVIVALAGFAIAFVI), 601-621 (FSIGIVYGIIAFLTQVVDVII), and 652-672 (TALIAGVSLLIILVKLIMEVL).

It belongs to the complex I subunit 5 family. As to quaternary structure, the FPO complex is composed of at least 13 different subunits. FpoA, FpoH, FpoJ, FpoK, FpoL, FpoM and FpoN proteins constitute the membrane sector of the complex.

It is found in the cell membrane. The enzyme catalyses methanophenazine + reduced coenzyme F420-(gamma-L-Glu)(n) = dihydromethanophenazine + oxidized coenzyme F420-(gamma-L-Glu)(n) + H(+). In terms of biological role, component of the F(420)H(2) dehydrogenase (FPO complex) which is part of the energy-conserving F(420)H(2):heterodisulfide oxidoreductase system. The membrane-bound electron transfer system of the complex plays an important role in the metabolism of methylotrophic methanogens when the organisms grow on methanol or methylamines. Catalyzes the oxidation of methanophenazine to dihydromethanophenazine. It shuttles electrons from F(420)H(2), via FAD and iron-sulfur (Fe-S) centers, to methanophenazine (an electron carrier in the membrane). It couples the redox reaction to proton translocation (for every two electrons transferred, two hydrogen ions are translocated across the cytoplasmic membrane), and thus conserves the redox energy in a proton gradient. It also catalyzes the oxidation of F(420)H(2) with quinones such as 2,3-dimethyl-1,4-naphthoquinone, 2-methyl-1,4-naphthoquinone and tetramethyl-p-benzoquinone. The polypeptide is F(420)H(2) dehydrogenase subunit L (fpoL) (Methanosarcina mazei (strain ATCC BAA-159 / DSM 3647 / Goe1 / Go1 / JCM 11833 / OCM 88) (Methanosarcina frisia)).